Here is a 402-residue protein sequence, read N- to C-terminus: MSKTPLTAKAIDAAQPQDKPYKLTDSLTPGLFLLVHPNGSKYWRFRYWLNKREFLQAIGVYPLITLKEARRRATESRSLIANGINPVEQARKEKAIDALNMAAGFKKVAEDWFATRVGGWSESYAKQVRSALEKDVYPVLGKRSIVDITARDVLALLQKKERTAPEQARKLRRRIGEIFKFAVITELVTRNPVADLDTALKARRPGHNAWIPISEIPAFYKALERAGSVQIQTAIRLLILTALRTAELRLCRWEWINLEDATITLPAEVMKARRPHVVPLSRQAVELLQDQFTRSGYSAFVFPGRFMDKPLSASAILKALERIGYKSIATGHGWRTTFSTALNESGRYSPDWIEIQLAHVPKGIRGVYNQAAYLKQRRAMMQDYADAIDSILAGNGNPLEPE.

A Core-binding (CB) domain is found at 103-183 (AGFKKVAEDW…RIGEIFKFAV (81 aa)). Residues 206 to 381 (GHNAWIPISE…AYLKQRRAMM (176 aa)) enclose the Tyr recombinase domain. Active-site residues include Arg244, Lys271, His332, Arg335, and His359. The active-site O-(3'-phospho-DNA)-tyrosine intermediate is Tyr368.

This sequence belongs to the 'phage' integrase family.

Its function is as follows. Integrase is necessary for integration of the phage into the host genome by site-specific recombination. In conjunction with excisionase, integrase is also necessary for excision of the prophage from the host genome. This is Prophage integrase IntZ (intZ) from Escherichia coli (strain K12).